The chain runs to 505 residues: MASPAMVPLRQLFVDGEWRPPAQGRRLPVVNPTTEAHIGEIPAGTAEDVDAAVAAARAALKRNRGRDWARAPGAVRAKYLRAIAAKVIERKPELAKLEALDCGKPYDEAAWDMDDVAGCFEYFADQAEALDKRQNSPVSLPMETFKCHLRREPIGVVGLITPWNYPLLMATWKIAPALAAGCTAVLKPSELASVTCLELADICKEVGLPSGVLNIVTGLGPDAGAPLSAHPDVDKVAFTGSFETGKKIMASAAPMVKPVTLELGGKSPIVVFDDVDIDKAVEWTLFGCFWTNGQICSATSRLLIHTKIAKKFNERMVAWAKNIKVSDPLEEGCRLGPVVSEGQYEKIKKFISNAKSQGATILTGGVRPAHLEKGFFIEPTIITDITTSMEIWREEVFGPVLCVKEFSTEDEAIELANDTQYGLAGAVISGDRERCQRLSEEIDAGCIWVNCSQPCFCQAPWGGNKRSGFGRELGEGGIDNYLSVKQVTEYISDEPWGWYQSPSKL.

Asp101 contacts Na(+). NAD(+) is bound by residues Thr161–Trp163 and Lys187–Glu190. Position 191 (Leu191) interacts with Na(+). NAD(+) contacts are provided by residues Ser241–Thr244 and Glu262. Residue Glu262 is the Proton acceptor of the active site. Cys296 acts as the Nucleophile in catalysis. NAD(+) is bound by residues Glu395 and Trp461.

The protein belongs to the aldehyde dehydrogenase family. As to quaternary structure, forms homodimers.

The catalysed reaction is 4-aminobutanal + NAD(+) + H2O = 4-aminobutanoate + NADH + 2 H(+). It carries out the reaction 3-aminopropanal + NAD(+) + H2O = beta-alanine + NADH + 2 H(+). The enzyme catalyses 4-(trimethylamino)butanal + NAD(+) + H2O = 4-(trimethylamino)butanoate + NADH + 2 H(+). It catalyses the reaction 4-guanidinobutanal + NAD(+) + H2O = 4-guanidinobutanoate + NADH + 2 H(+). The catalysed reaction is betaine aldehyde + NAD(+) + H2O = glycine betaine + NADH + 2 H(+). It functions in the pathway amine and polyamine biosynthesis; betaine biosynthesis via choline pathway; betaine from betaine aldehyde: step 1/1. Functionally, dehydrogenase that catalyzes the oxidation of several aminoaldehydes. Metabolizes and detoxifies aldehyde products of polyamine degradation to non-toxic amino acids. Catalyzes the oxidation of 4-aminobutanal and 3-aminopropanal to 4-aminobutanoate and beta-alanine, respectively. Catalyzes the oxidation of 4-(trimethylamino)butanal and 4-guanidinobutanal to 4-trimethylammoniobutanoate and 4-guanidinobutanoate, respectively. Catalyzes the oxidation of betaine aldehyde to glycine betaine. In terms of biological role, dehydrogenase that catalyzes the oxidation of several aminoaldehydes. Catalyzes the oxidation of betaine aldehyde to glycine betaine. Catalyzes the oxidation of 4-(trimethylamino)butanal to 4-trimethylammoniobutanoate. This chain is Aminoaldehyde dehydrogenase 1a, found in Zea mays (Maize).